Reading from the N-terminus, the 500-residue chain is Aspartyl/glutamyl-tRNA(Asn/Gln) amidotransferase subunit B (500 aa).

Belongs to the GatB/GatE family. GatB subfamily. As to quaternary structure, heterotrimer of A, B and C subunits.

The catalysed reaction is L-glutamyl-tRNA(Gln) + L-glutamine + ATP + H2O = L-glutaminyl-tRNA(Gln) + L-glutamate + ADP + phosphate + H(+). It carries out the reaction L-aspartyl-tRNA(Asn) + L-glutamine + ATP + H2O = L-asparaginyl-tRNA(Asn) + L-glutamate + ADP + phosphate + 2 H(+). Functionally, allows the formation of correctly charged Asn-tRNA(Asn) or Gln-tRNA(Gln) through the transamidation of misacylated Asp-tRNA(Asn) or Glu-tRNA(Gln) in organisms which lack either or both of asparaginyl-tRNA or glutaminyl-tRNA synthetases. The reaction takes place in the presence of glutamine and ATP through an activated phospho-Asp-tRNA(Asn) or phospho-Glu-tRNA(Gln). In Brucella melitensis biotype 2 (strain ATCC 23457), this protein is Aspartyl/glutamyl-tRNA(Asn/Gln) amidotransferase subunit B.